A 60-amino-acid polypeptide reads, in one-letter code: Short neurotoxin 1 (60 aa).

4 disulfides stabilise this stretch: Cys-3/Cys-22, Cys-17/Cys-39, Cys-41/Cys-52, and Cys-53/Cys-58.

Belongs to the three-finger toxin family. Short-chain subfamily. Type I alpha-neurotoxin sub-subfamily. In terms of tissue distribution, expressed by the venom gland.

The protein resides in the secreted. Functionally, binds to muscle nicotinic acetylcholine receptor (nAChR) and inhibit acetylcholine from binding to the receptor, thereby impairing neuromuscular transmission. This chain is Short neurotoxin 1, found in Hydrophis ornatus (Ornate reef seasnake).